We begin with the raw amino-acid sequence, 480 residues long: Siroheme synthase 1 (480 aa).

Positions 1-203 are precorrin-2 dehydrogenase /sirohydrochlorin ferrochelatase; the sequence is MNYLPIFADL…GQLEQAEGEL (203 aa). Residues 22–23 and 43–44 contribute to the NAD(+) site; these read EV and LA. At Ser128 the chain carries Phosphoserine. Residues 222–480 form a uroporphyrinogen-III C-methyltransferase region; that stretch reads GEVALVGAGP…DSRPAVVNLA (259 aa). An S-adenosyl-L-methionine-binding site is contributed by Pro231. Asp254 acts as the Proton acceptor in catalysis. Lys276 serves as the catalytic Proton donor. S-adenosyl-L-methionine is bound by residues 307–309, Ile312, 337–338, Met389, and Gly418; these read GGD and TA.

The protein in the N-terminal section; belongs to the precorrin-2 dehydrogenase / sirohydrochlorin ferrochelatase family. In the C-terminal section; belongs to the precorrin methyltransferase family.

The catalysed reaction is uroporphyrinogen III + 2 S-adenosyl-L-methionine = precorrin-2 + 2 S-adenosyl-L-homocysteine + H(+). It carries out the reaction precorrin-2 + NAD(+) = sirohydrochlorin + NADH + 2 H(+). The enzyme catalyses siroheme + 2 H(+) = sirohydrochlorin + Fe(2+). Its pathway is cofactor biosynthesis; adenosylcobalamin biosynthesis; precorrin-2 from uroporphyrinogen III: step 1/1. It participates in cofactor biosynthesis; adenosylcobalamin biosynthesis; sirohydrochlorin from precorrin-2: step 1/1. It functions in the pathway porphyrin-containing compound metabolism; siroheme biosynthesis; precorrin-2 from uroporphyrinogen III: step 1/1. The protein operates within porphyrin-containing compound metabolism; siroheme biosynthesis; siroheme from sirohydrochlorin: step 1/1. Its pathway is porphyrin-containing compound metabolism; siroheme biosynthesis; sirohydrochlorin from precorrin-2: step 1/1. Its function is as follows. Multifunctional enzyme that catalyzes the SAM-dependent methylations of uroporphyrinogen III at position C-2 and C-7 to form precorrin-2 via precorrin-1. Then it catalyzes the NAD-dependent ring dehydrogenation of precorrin-2 to yield sirohydrochlorin. Finally, it catalyzes the ferrochelation of sirohydrochlorin to yield siroheme. This Pectobacterium atrosepticum (strain SCRI 1043 / ATCC BAA-672) (Erwinia carotovora subsp. atroseptica) protein is Siroheme synthase 1.